Reading from the N-terminus, the 161-residue chain is Stress response protein YvgO (161 aa).

The first 26 residues, 1 to 26, serve as a signal peptide directing secretion; that stretch reads MKRIRIPMTLALGAALTIAPLSFASA.

In Bacillus subtilis (strain 168), this protein is Stress response protein YvgO (yvgO).